The following is a 1008-amino-acid chain: PAN2-PAN3 deadenylation complex catalytic subunit PAN2 (1008 aa).

WD repeat units follow at residues 29–68, 110–149, 158–198, 200–236, and 277–316; these read GQLT…PYSR, PSLG…VTRV, HMAG…FSDV, VQDN…AMAP, and AEVA…SFAE. The interval 314–449 is linker; sequence FAEFSAPTAF…TCTEASMSSK (136 aa). Residues 450-755 enclose the USP domain; sequence KVPRLYRKLE…RTVMMVYAVG (306 aa). Positions 808–976 constitute an Exonuclease domain; sequence AIDAEFVVLK…EDSHTALLLY (169 aa). A divalent metal cation is bound by residues Asp810, Glu812, Asp915, and Asp968.

This sequence belongs to the peptidase C19 family. PAN2 subfamily. Forms a heterotrimer with an asymmetric homodimer of the regulatory subunit PAN3 to form the poly(A)-nuclease (PAN) deadenylation complex. A divalent metal cation serves as cofactor.

The protein resides in the cytoplasm. It carries out the reaction Exonucleolytic cleavage of poly(A) to 5'-AMP.. Its activity is regulated as follows. Positively regulated by the regulatory subunit PAN3. Its function is as follows. Catalytic subunit of the poly(A)-nuclease (PAN) deadenylation complex, one of two cytoplasmic mRNA deadenylases involved in mRNA turnover. PAN specifically shortens poly(A) tails of RNA and the activity is stimulated by poly(A)-binding protein PAB1. PAN deadenylation is followed by rapid degradation of the shortened mRNA tails by the CCR4-NOT complex. Deadenylated mRNAs are then degraded by two alternative mechanisms, namely exosome-mediated 3'-5' exonucleolytic degradation, or deadenylation-dependent mRNA decaping and subsequent 5'-3' exonucleolytic degradation by XRN1. May also be involved in post-transcriptional maturation of mRNA poly(A) tails. This is PAN2-PAN3 deadenylation complex catalytic subunit PAN2 from Yarrowia lipolytica (strain CLIB 122 / E 150) (Yeast).